Reading from the N-terminus, the 173-residue chain is Small ribosomal subunit protein uS4c (173 aa).

One can recognise an S4 RNA-binding domain in the interval 94 to 155 (SRLDSKIYRS…TKLTSELIEK (62 aa)).

It belongs to the universal ribosomal protein uS4 family. As to quaternary structure, part of the 30S ribosomal subunit. Contacts protein S5. The interaction surface between S4 and S5 is involved in control of translational fidelity.

It localises to the plastid. Functionally, one of the primary rRNA binding proteins, it binds directly to 16S rRNA where it nucleates assembly of the body of the 30S subunit. With S5 and S12 plays an important role in translational accuracy. The chain is Small ribosomal subunit protein uS4c (rps4) from Helicosporidium sp. subsp. Simulium jonesii (Green alga).